Here is a 557-residue protein sequence, read N- to C-terminus: Ribonuclease J 2 (557 aa).

Zn(2+)-binding residues include histidine 76, histidine 78, histidine 144, and glutamate 166. 366–370 contributes to the substrate binding site; it reads HASSH.

This sequence belongs to the metallo-beta-lactamase superfamily. RNA-metabolizing metallo-beta-lactamase-like family. Bacterial RNase J subfamily. Homodimer. Component of a possible RNA degradosome complex composed of cshA, eno, pfkA, pnp, rnjA, rnjB, rnpA and rny. Interacts specifically with RNase J1. Zn(2+) is required as a cofactor.

The protein resides in the cytoplasm. In terms of biological role, an RNase that has 5'-3' exonuclease and endonuclease activity, with the exonuclease activity probably being most important in vivo. Involved in maturation of 16S rRNA, rnpB (the RNA component of RNase P) maturation and degradation, and mRNA maturation and/or decay. This subunit probably plays a structural rather than enzymatic role as mutation of its putative active site gives no phenotype, and its deletion is partially complemented by inactive RNase J1. The sequence is that of Ribonuclease J 2 from Staphylococcus aureus (strain NCTC 8325 / PS 47).